The following is a 252-amino-acid chain: Type II secretion system protein N (252 aa).

The Cytoplasmic segment spans residues Met-1–Arg-4. The helical transmembrane segment at Leu-5–Ala-25 threads the bilayer. Over Arg-26 to Lys-252 the chain is Periplasmic.

It belongs to the GSP N family.

The protein localises to the cell inner membrane. Its function is as follows. Involved in a type II secretion system (T2SS, formerly general secretion pathway, GSP) for the export of proteins. Required for the translocation of pullulanase. The chain is Type II secretion system protein N (pulN) from Klebsiella pneumoniae.